Here is a 323-residue protein sequence, read N- to C-terminus: Voltage-dependent calcium channel gamma-2 subunit (323 aa).

A helical transmembrane segment spans residues 10–30 (MLLTTVGAFAAFSLMTIAVGT). The N-linked (GlcNAc...) asparagine glycan is linked to Asn48. Transmembrane regions (helical) follow at residues 104-124 (SSIFPILSVILLFMGGLCIAA), 134-154 (IILSAGIFFVSAGLSNIIGII), and 182-202 (FGALSFIIAEMVGVLAVHMFI). Positions 233–261 (YQRRSRSSSRSTEPSHSRDASPVGVKGFN) are disordered. Position 253 is a phosphoserine (Ser253). Phosphotyrosine is present on Tyr271. Residue Thr321 is modified to Phosphothreonine; by PKA.

This sequence belongs to the PMP-22/EMP/MP20 family. CACNG subfamily. The L-type calcium channel is composed of five subunits: alpha-1, alpha-2/delta, beta and gamma. Interacts with the PDZ domains of DLG4/PSD-95 and DLG1/SAP97. May interact with GOPC. Acts as an auxiliary subunit for AMPA-selective glutamate receptors (AMPARs). Found in a complex with GRIA1, GRIA2, GRIA3, GRIA4, CNIH2, CNIH3, CACNG3, CACNG4, CACNG5, CACNG7 and CACNG8. Interacts with GRIA1 and GRIA2. Interacts with MPP2. In terms of processing, phosphorylation of Thr-321 by PKA impairs interaction with DLG1 and DLG4. Brain.

Its subcellular location is the membrane. The protein localises to the synapse. It is found in the synaptosome. Its function is as follows. Regulates the trafficking and gating properties of AMPA-selective glutamate receptors (AMPARs). Promotes their targeting to the cell membrane and synapses and modulates their gating properties by slowing their rates of activation, deactivation and desensitization. Does not show subunit-specific AMPA receptor regulation and regulates all AMPAR subunits. Thought to stabilize the calcium channel in an inactivated (closed) state. The sequence is that of Voltage-dependent calcium channel gamma-2 subunit (Cacng2) from Mus musculus (Mouse).